A 228-amino-acid chain; its full sequence is UPF0758 protein Reut_A2732 (228 aa).

The MPN domain occupies 102 to 224 (GLDSPAAVRS…VHSFAEHGEL (123 aa)). Zn(2+) contacts are provided by His173, His175, and Asp186. The JAMM motif motif lies at 173–186 (HNHPSGCCTPSQSD).

The protein belongs to the UPF0758 family.

This chain is UPF0758 protein Reut_A2732, found in Cupriavidus pinatubonensis (strain JMP 134 / LMG 1197) (Cupriavidus necator (strain JMP 134)).